The sequence spans 137 residues: Transcription antitermination protein NusB (137 aa).

The protein belongs to the NusB family.

Involved in transcription antitermination. Required for transcription of ribosomal RNA (rRNA) genes. Binds specifically to the boxA antiterminator sequence of the ribosomal RNA (rrn) operons. The sequence is that of Transcription antitermination protein NusB from Clavibacter michiganensis subsp. michiganensis (strain NCPPB 382).